The primary structure comprises 108 residues: MNSGQLAEQHARTYLEQQGLTFVDANVRYPFGEIDLIMRQQDVWVFVEVKFRSSNQFGGALNALTSKQITRIRLAAEHYLQRQKLNPPCRFDVIAMNIDEINWLQGCF.

This sequence belongs to the UPF0102 family.

The chain is UPF0102 protein Sfri_0388 from Shewanella frigidimarina (strain NCIMB 400).